The chain runs to 83 residues: Mitotic-spindle organizing protein 1 (83 aa).

This sequence belongs to the MOZART1 family. Part of the gamma-tubulin complex.

It is found in the cytoplasm. Its subcellular location is the cytoskeleton. The protein resides in the microtubule organizing center. It localises to the spindle pole body. Functionally, required for gamma-tubulin complex recruitment to the microtubule organizing center (MTOC). This Botryotinia fuckeliana (strain B05.10) (Noble rot fungus) protein is Mitotic-spindle organizing protein 1.